The primary structure comprises 224 residues: Extracellular protease inhibitor 10 (224 aa).

The signal sequence occupies residues M1 to A22. Kazal-like domains are found at residues D23 to S72, T90 to K127, and G156 to S210. The N-linked (GlcNAc...) asparagine glycan is linked to N25. 3 disulfide bridges follow: C26–C56, C30–C49, and C38–C70. Positions E69–G92 are disordered. Residues A71–G92 show a composition bias toward low complexity. Intrachain disulfides connect C96–C126, C100–C119, C162–C193, C167–C186, and C175–C208. A glycan (N-linked (GlcNAc...) asparagine) is linked at N199. The segment at M202–L224 is disordered. Positions Q211 to L224 are enriched in low complexity.

As to quaternary structure, interacts with host subtilisin-like protease P69B.

The protein resides in the secreted. Its function is as follows. Secreted effector that interacts with and inhibits the pathogenesis-related P69B subtilisin-like serine protease of host tomato. Inhibition of host proteases by a pathogen extracellular protease inhibitor forms a specific type of defense-counterdefense mechanism between plants and microbial pathogens. This is Extracellular protease inhibitor 10 from Phytophthora infestans (Potato late blight agent).